A 139-amino-acid chain; its full sequence is uncharacterized protein (139 aa).

It to E.coli YebE.

This is an uncharacterized protein from Yersinia enterocolitica.